A 245-amino-acid chain; its full sequence is PF03932 family protein CutC (245 aa).

Belongs to the CutC family.

It is found in the cytoplasm. The protein is PF03932 family protein CutC of Caulobacter vibrioides (strain ATCC 19089 / CIP 103742 / CB 15) (Caulobacter crescentus).